Here is a 136-residue protein sequence, read N- to C-terminus: Small ribosomal subunit protein uS8 (136 aa).

It belongs to the universal ribosomal protein uS8 family. Part of the 30S ribosomal subunit. Contacts proteins S5 and S12.

Its function is as follows. One of the primary rRNA binding proteins, it binds directly to 16S rRNA central domain where it helps coordinate assembly of the platform of the 30S subunit. This chain is Small ribosomal subunit protein uS8, found in Persephonella marina (strain DSM 14350 / EX-H1).